Reading from the N-terminus, the 256-residue chain is uncharacterized protein (256 aa).

The 68-residue stretch at 16-83 folds into the S4 RNA-binding domain; sequence VRLQKILSRA…DSLVYLALNK (68 aa). The Nucleophile role is filled by Asp-121.

Belongs to the pseudouridine synthase RsuA family.

It catalyses the reaction a uridine in RNA = a pseudouridine in RNA. This is an uncharacterized protein from Mycobacterium leprae (strain TN).